The primary structure comprises 34 residues: Delta-theraphotoxin-Hm1b (34 aa).

3 disulfide bridges follow: Cys-2-Cys-16, Cys-9-Cys-21, and Cys-15-Cys-28. Phe-34 bears the Phenylalanine amide mark.

This sequence belongs to the neurotoxin 10 (Hwtx-1) family. 09 (HaTx) subfamily. In terms of tissue distribution, expressed by the venom gland.

It is found in the secreted. Gating-modifier toxin that potently and selectively acts on Nav1.1/SCN1A and Nav1.3/SCN3A. It enhances hNav1.1/SCN1A currents and delays fast inactivation of the channel (EC(50)=11.6 nM), leading to a sustained current. Similar effects are observed at Nav1.3/SCN3A (EC(50)=11.8 nM), but with less sustained currents. When tested on Nav1.2/SCN2A, the native toxin decreases the peak current by 50% at saturating concentration, whereas the recombinant toxin only shows a weak decrease of peak current. The native toxin specifically activates the voltage-gated sodium channel Nav1.1/SCN1A in somatosensory neurons to elicit acute pain and mechanical allodynia. When tested on Nav1.1/SCN1A, the toxin induces a hyperpolarising shift of the voltage-dependence of steady-state activation, and induces a depolarizing shift in the voltage dependence of inactivation. In addition, it does not modify the recovery from fast inactivation in Nav1.1/SCN1A. The toxin hydrophobic face probably interacts with the domain IV voltage-sensor of Nav1.1/SCN1A and Nav1.3/SCN3A and may trap the voltage-sensing S4 helix in a partially activated state. In vivo, intracerebroventricular injection into mice elicits convulsions, spasms, tremors and rapid death. When injected into mouse hindpaw, the toxin elicits an immediate and robust response to pain. However, intraplantar injection of toxin does not cause neurogenic inflammation or alter sensitivity to heat, indicative of a modality-specific effect on mechanosensitive neurons. This chain is Delta-theraphotoxin-Hm1b, found in Heteroscodra maculata (Togo starburst tarantula).